The following is a 208-amino-acid chain: F-box/kelch-repeat protein At2g43270 (208 aa).

Positions M1 to R44 constitute an F-box domain. Residues R149–G200 form a Kelch repeat.

In Arabidopsis thaliana (Mouse-ear cress), this protein is F-box/kelch-repeat protein At2g43270.